We begin with the raw amino-acid sequence, 481 residues long: Flavonol 3-O-glucosyltransferase UGT71C1 (481 aa).

The Proton acceptor role is filled by H19. H19 serves as a coordination point for an anthocyanidin. D131 acts as the Charge relay in catalysis. Positions 153, 352, 354, 369, 372, 373, 374, and 377 each coordinate UDP-alpha-D-glucose. A392 provides a ligand contact to an anthocyanidin. 2 residues coordinate UDP-alpha-D-glucose: E393 and Q394.

This sequence belongs to the UDP-glycosyltransferase family.

The catalysed reaction is a flavonol + UDP-alpha-D-glucose = a flavonol 3-O-beta-D-glucoside + UDP + H(+). It catalyses the reaction a 7-O-hydroxy-flavonol + UDP-alpha-D-glucose = a flavonol 7-O-beta-D-glucoside + UDP + H(+). In terms of biological role, possesses quercetin 7-O-glucosyltransferase and 3'-O-glucosyltransferase activities in vitro. Also active in vitro on benzoates and benzoate derivatives. Glucosylates other secondary metabolites in vitro like trans-resveratrol, curcumin, vanillin and etoposide. The sequence is that of Flavonol 3-O-glucosyltransferase UGT71C1 from Arabidopsis thaliana (Mouse-ear cress).